A 601-amino-acid chain; its full sequence is Dual specificity tyrosine-phosphorylation-regulated kinase 2 (601 aa).

The segment at methionine 1 to valine 24 is disordered. A Phosphoserine modification is found at serine 30. A Phosphothreonine; by ATM modification is found at threonine 106. The Nuclear localization signal signature appears at lysine 189–arginine 191. In terms of domain architecture, Protein kinase spans tyrosine 222 to leucine 535. Residues isoleucine 228–valine 236, lysine 251, and phenylalanine 301–leucine 304 each bind ATP. The active-site Proton acceptor is the aspartate 348. Residue threonine 381 is modified to Phosphothreonine; by MAP3K10. Phosphotyrosine; by autocatalysis is present on tyrosine 382. Residue serine 442 is modified to Phosphoserine; by ATM. Serine 449 is modified (phosphoserine; by MAP3K10).

Belongs to the protein kinase superfamily. CMGC Ser/Thr protein kinase family. MNB/DYRK subfamily. As to quaternary structure, component of an E3 ligase complex containing DYRK2, EDD/UBR5, DDB1 and DCAF1 (EDVP complex). Interacts directly with EDD/UBR5, DDB1 and DCAF1. Interacts with SIAH2 and MDM2. Interacts with MAP3K10 and NFATC1. May also interact with CCNL2. It depends on Mg(2+) as a cofactor. The cofactor is Mn(2+). Post-translationally, autophosphorylates cotranslationally on the second tyrosine residue in the Tyr-X-Tyr motif in the activation loop, but once mature, does not have any protein tyrosine kinase activity. Phosphorylated at Thr-106 and Ser-442 by ATM in response to genotoxic stress. Under normal conditions, polyubiquitinated in the nucleus by MDM2, leading to its proteasomal degradation. Phosphorylation on Thr-106 and Ser-442 by ATM in response to genotoxic stress disrupts MDM2 binding and prevents MDM2-mediated ubiquitination and subsequent proteasomal degradation. Polyubiquitinated by SIAH2, leading to its proteasomal degradation. Polyubiquitinated by SIAH2 occurs under normal conditions, and is enhanced in response to hypoxia. As to expression, testis, after the onset of spermatogenesis.

The protein resides in the cytoplasm. It localises to the nucleus. The enzyme catalyses L-seryl-[protein] + ATP = O-phospho-L-seryl-[protein] + ADP + H(+). It catalyses the reaction L-threonyl-[protein] + ATP = O-phospho-L-threonyl-[protein] + ADP + H(+). The catalysed reaction is L-tyrosyl-[protein] + ATP = O-phospho-L-tyrosyl-[protein] + ADP + H(+). Activated by autophosphorylation on the second tyrosine residue in the Tyr-X-Tyr motif in the activation loop. Inhibited by acridine analogs, purvalanol, and barely by harmine. Inhibited by leucettine and leucettine derivatives. In terms of biological role, serine/threonine-protein kinase involved in the regulation of the mitotic cell cycle, cell proliferation, apoptosis, organization of the cytoskeleton and neurite outgrowth. Functions in part via its role in ubiquitin-dependent proteasomal protein degradation. Functions downstream of ATM and phosphorylates p53/TP53 at 'Ser-46', and thereby contributes to the induction of apoptosis in response to DNA damage. Phosphorylates NFATC1, and thereby inhibits its accumulation in the nucleus and its transcription factor activity. Phosphorylates EIF2B5 at 'Ser-544', enabling its subsequent phosphorylation and inhibition by GSK3B. Likewise, phosphorylation of NFATC1, CRMP2/DPYSL2 and CRMP4/DPYSL3 promotes their subsequent phosphorylation by GSK3B. May play a general role in the priming of GSK3 substrates. Inactivates GYS1 by phosphorylation at 'Ser-641', and potentially also a second phosphorylation site, thus regulating glycogen synthesis. Mediates EDVP E3 ligase complex formation and is required for the phosphorylation and subsequent degradation of KATNA1. Phosphorylates TERT at 'Ser-457', promoting TERT ubiquitination by the EDVP complex. Phosphorylates SIAH2, and thereby increases its ubiquitin ligase activity. Promotes the proteasomal degradation of MYC and JUN, and thereby regulates progress through the mitotic cell cycle and cell proliferation. Promotes proteasomal degradation of GLI2 and GLI3, and thereby plays a role in smoothened and sonic hedgehog signaling. Plays a role in cytoskeleton organization and neurite outgrowth via its phosphorylation of DCX and DPYSL2. Phosphorylates CRMP2/DPYSL2, CRMP4/DPYSL3, DCX, EIF2B5, EIF4EBP1, GLI2, GLI3, GYS1, JUN, MDM2, MYC, NFATC1, p53/TP53, TAU/MAPT and KATNA1. Can phosphorylate histone H1, histone H3 and histone H2B (in vitro). Can phosphorylate CARHSP1 (in vitro). The protein is Dual specificity tyrosine-phosphorylation-regulated kinase 2 (DYRK2) of Homo sapiens (Human).